A 424-amino-acid chain; its full sequence is Serine--tRNA ligase (424 aa).

Residue threonine 228–glutamate 230 coordinates L-serine. Arginine 259–glutamate 261 lines the ATP pocket. L-serine is bound at residue glutamate 282. Glutamate 346–serine 349 lines the ATP pocket. Serine 382 is an L-serine binding site.

Belongs to the class-II aminoacyl-tRNA synthetase family. Type-1 seryl-tRNA synthetase subfamily. As to quaternary structure, homodimer. The tRNA molecule binds across the dimer.

The protein resides in the cytoplasm. The enzyme catalyses tRNA(Ser) + L-serine + ATP = L-seryl-tRNA(Ser) + AMP + diphosphate + H(+). It catalyses the reaction tRNA(Sec) + L-serine + ATP = L-seryl-tRNA(Sec) + AMP + diphosphate + H(+). It functions in the pathway aminoacyl-tRNA biosynthesis; selenocysteinyl-tRNA(Sec) biosynthesis; L-seryl-tRNA(Sec) from L-serine and tRNA(Sec): step 1/1. Its function is as follows. Catalyzes the attachment of serine to tRNA(Ser). Is also able to aminoacylate tRNA(Sec) with serine, to form the misacylated tRNA L-seryl-tRNA(Sec), which will be further converted into selenocysteinyl-tRNA(Sec). This is Serine--tRNA ligase from Rhodospirillum centenum (strain ATCC 51521 / SW).